A 564-amino-acid polypeptide reads, in one-letter code: MFS-type transporter kojT (564 aa).

An N-linked (GlcNAc...) asparagine glycan is attached at N113. Helical transmembrane passes span 120-140, 159-179, 187-207, 217-237, 249-269, 278-298, 353-373, 389-409, 437-457, 462-482, 500-520, and 530-550; these read WATLGIVGTTGMLVGWASSID, SLATALFLFAFGFGSLVAAPF, PVYIATLSILMIFTMASGLAP, FLAGLFGCTPMTTFGGSMADI, VCCTLSFLGPFLAPMVGAFIG, WTEWCTLIMAALVTGAIFLFV, IMVALFTMYLVVVYIVLFGFL, GSVGLTFIGMNIGFLIAFAMV, LWFAMYGAPWLPISLFWMGWT, ISYWSPLVASVAFGFSVQGIF, ALVSATFFRYIAAGAMVIVSI, and WSLTLLGCISVLMTPVPYIFY.

The protein belongs to the major facilitator superfamily.

It localises to the cell membrane. In terms of biological role, MFS-type transporter; part of the gene cluster that mediates the biosynthesis of 5-hydroxy-2-hydroxymethyl-1,4-pyrone, also know as kojic acid, a by-product in the fermentation process of malting rice that acts as a chelation agent. Involved in the seretion of kojic acid. In Aspergillus flavus (strain ATCC 200026 / FGSC A1120 / IAM 13836 / NRRL 3357 / JCM 12722 / SRRC 167), this protein is MFS-type transporter kojT.